Here is a 267-residue protein sequence, read N- to C-terminus: MTQIHSTALVDPKAELADDVTVGPFSIVGPNVRIGSGTRIGSHTTVEGHTTIGAGNRIGPYASVGGVPQDMKYANEPTQLVIGDRNTIREFTTIHTGTVQDRGVTSLGNDNWIMAYVHIAHDCSVGNHTVFSSNAQIAGHVEVGDWAILGGMSGVHQYVRIGAHAMLGGASALVQDVPPFVIAASDKNGNKATPHGINVEGLRRRGFDAGQIAALRQAYKLLYKSDLSFDDARAEITAMLGQVDATTAVPLQAFVEFLAATQRGIVR.

Belongs to the transferase hexapeptide repeat family. LpxA subfamily. In terms of assembly, homotrimer.

The protein resides in the cytoplasm. The catalysed reaction is a (3R)-hydroxyacyl-[ACP] + UDP-N-acetyl-alpha-D-glucosamine = a UDP-3-O-[(3R)-3-hydroxyacyl]-N-acetyl-alpha-D-glucosamine + holo-[ACP]. It functions in the pathway glycolipid biosynthesis; lipid IV(A) biosynthesis; lipid IV(A) from (3R)-3-hydroxytetradecanoyl-[acyl-carrier-protein] and UDP-N-acetyl-alpha-D-glucosamine: step 1/6. Involved in the biosynthesis of lipid A, a phosphorylated glycolipid that anchors the lipopolysaccharide to the outer membrane of the cell. In Cupriavidus metallidurans (strain ATCC 43123 / DSM 2839 / NBRC 102507 / CH34) (Ralstonia metallidurans), this protein is Acyl-[acyl-carrier-protein]--UDP-N-acetylglucosamine O-acyltransferase.